Consider the following 179-residue polypeptide: UPF0316 protein Ping_1367 (179 aa).

Transmembrane regions (helical) follow at residues 28-48 and 55-75; these read FLASFIGFFEIIIWLVASAQV and WYLALAYASGFSVGNYAGISI.

It belongs to the UPF0316 family.

Its subcellular location is the cell membrane. The protein is UPF0316 protein Ping_1367 of Psychromonas ingrahamii (strain DSM 17664 / CCUG 51855 / 37).